Consider the following 279-residue polypeptide: Pantothenate synthetase (279 aa).

Residue 31–38 (MGALHEGH) coordinates ATP. Histidine 38 serves as the catalytic Proton donor. Residue glutamine 62 coordinates (R)-pantoate. Glutamine 62 lines the beta-alanine pocket. 148 to 151 (GEKD) provides a ligand contact to ATP. Glutamine 154 serves as a coordination point for (R)-pantoate. Residues valine 177 and 185–188 (LSSR) each bind ATP.

Belongs to the pantothenate synthetase family. As to quaternary structure, homodimer.

Its subcellular location is the cytoplasm. It catalyses the reaction (R)-pantoate + beta-alanine + ATP = (R)-pantothenate + AMP + diphosphate + H(+). The protein operates within cofactor biosynthesis; (R)-pantothenate biosynthesis; (R)-pantothenate from (R)-pantoate and beta-alanine: step 1/1. Catalyzes the condensation of pantoate with beta-alanine in an ATP-dependent reaction via a pantoyl-adenylate intermediate. This Cereibacter sphaeroides (strain ATCC 17029 / ATH 2.4.9) (Rhodobacter sphaeroides) protein is Pantothenate synthetase.